We begin with the raw amino-acid sequence, 72 residues long: MAKEDVIEMQGTVLDTLPNTMFRVELENGHVVVAHISGKMRKNYIRILTGDKVTVEMTPYDLSKGRIVFRAR.

One can recognise an S1-like domain in the interval 1-72; sequence MAKEDVIEMQ…SKGRIVFRAR (72 aa).

Belongs to the IF-1 family. In terms of assembly, component of the 30S ribosomal translation pre-initiation complex which assembles on the 30S ribosome in the order IF-2 and IF-3, IF-1 and N-formylmethionyl-tRNA(fMet); mRNA recruitment can occur at any time during PIC assembly.

Its subcellular location is the cytoplasm. In terms of biological role, one of the essential components for the initiation of protein synthesis. Stabilizes the binding of IF-2 and IF-3 on the 30S subunit to which N-formylmethionyl-tRNA(fMet) subsequently binds. Helps modulate mRNA selection, yielding the 30S pre-initiation complex (PIC). Upon addition of the 50S ribosomal subunit IF-1, IF-2 and IF-3 are released leaving the mature 70S translation initiation complex. The sequence is that of Translation initiation factor IF-1 from Pseudoalteromonas translucida (strain TAC 125).